Reading from the N-terminus, the 142-residue chain is SLSDKDKNTVRALWAKISKSADVIGAEALARMLTVYPQTKTYFTHWTDLSPSSTSVKNHGKNIMVGVSLAVSKMDDLTAGLLELSEKHAFQLRVDPANFKLLSHCLLVVISIMFPKEFGPEVHVSVDKFFANLALALSERYR.

An N-acetylserine modification is found at Ser-1. Positions 1-142 (SLSDKDKNTV…LALALSERYR (142 aa)) constitute a Globin domain. O2 is bound at residue His-59. Residue His-88 coordinates heme b.

The protein belongs to the globin family. As to quaternary structure, heterotetramer of two alpha chains and two beta chains. Can form polymers. Red blood cells.

Functionally, involved in oxygen transport from gills to the various peripheral tissues. The polypeptide is Hemoglobin subunit alpha (hba) (Chelidonichthys kumu (Bluefin gurnard)).